A 727-amino-acid chain; its full sequence is 1,4-alpha-glucan branching enzyme GlgB (727 aa).

Aspartate 405 functions as the Nucleophile in the catalytic mechanism. The active-site Proton donor is the glutamate 458.

Belongs to the glycosyl hydrolase 13 family. GlgB subfamily. In terms of assembly, monomer.

The enzyme catalyses Transfers a segment of a (1-&gt;4)-alpha-D-glucan chain to a primary hydroxy group in a similar glucan chain.. The protein operates within glycan biosynthesis; glycogen biosynthesis. Its function is as follows. Catalyzes the formation of the alpha-1,6-glucosidic linkages in glycogen by scission of a 1,4-alpha-linked oligosaccharide from growing alpha-1,4-glucan chains and the subsequent attachment of the oligosaccharide to the alpha-1,6 position. The protein is 1,4-alpha-glucan branching enzyme GlgB of Yersinia pseudotuberculosis serotype I (strain IP32953).